A 453-amino-acid polypeptide reads, in one-letter code: Trigger factor (453 aa).

A PPIase FKBP-type domain is found at 171-256 (GDRVTVSFKG…ATLVEAPKDT (86 aa)).

Belongs to the FKBP-type PPIase family. Tig subfamily.

Its subcellular location is the cytoplasm. The enzyme catalyses [protein]-peptidylproline (omega=180) = [protein]-peptidylproline (omega=0). Involved in protein export. Acts as a chaperone by maintaining the newly synthesized protein in an open conformation. Functions as a peptidyl-prolyl cis-trans isomerase. In Rhodopseudomonas palustris (strain BisA53), this protein is Trigger factor.